The chain runs to 340 residues: Glyceraldehyde-3-phosphate dehydrogenase (340 aa).

NAD(+) is bound by residues 11-12 (SI) and glycine 111. Residue 140–142 (SCN) coordinates D-glyceraldehyde 3-phosphate. The Nucleophile role is filled by cysteine 141. An NAD(+)-binding site is contributed by arginine 169. 195-196 (HG) contributes to the D-glyceraldehyde 3-phosphate binding site. Glutamine 303 serves as a coordination point for NAD(+).

It belongs to the glyceraldehyde-3-phosphate dehydrogenase family. Homotetramer.

It is found in the cytoplasm. It catalyses the reaction D-glyceraldehyde 3-phosphate + phosphate + NADP(+) = (2R)-3-phospho-glyceroyl phosphate + NADPH + H(+). The catalysed reaction is D-glyceraldehyde 3-phosphate + phosphate + NAD(+) = (2R)-3-phospho-glyceroyl phosphate + NADH + H(+). It functions in the pathway carbohydrate degradation; glycolysis; pyruvate from D-glyceraldehyde 3-phosphate: step 1/5. This Methanococcus maripaludis (strain C7 / ATCC BAA-1331) protein is Glyceraldehyde-3-phosphate dehydrogenase.